Here is a 62-residue protein sequence, read N- to C-terminus: Large ribosomal subunit protein uL29 (62 aa).

The protein belongs to the universal ribosomal protein uL29 family.

This is Large ribosomal subunit protein uL29 from Chromobacterium violaceum (strain ATCC 12472 / DSM 30191 / JCM 1249 / CCUG 213 / NBRC 12614 / NCIMB 9131 / NCTC 9757 / MK).